The chain runs to 430 residues: Trigger factor (430 aa).

Residues 157–242 (GDLVALETWS…AVEVSEPVLP (86 aa)) enclose the PPIase FKBP-type domain.

Belongs to the FKBP-type PPIase family. Tig subfamily.

It is found in the cytoplasm. It carries out the reaction [protein]-peptidylproline (omega=180) = [protein]-peptidylproline (omega=0). Involved in protein export. Acts as a chaperone by maintaining the newly synthesized protein in an open conformation. Functions as a peptidyl-prolyl cis-trans isomerase. In Xanthomonas oryzae pv. oryzae (strain MAFF 311018), this protein is Trigger factor.